The following is a 205-amino-acid chain: Recombination protein RecR (205 aa).

Residues 59–74 form a C4-type zinc finger; it reads CSVCFHLSAEPVCEVC. The Toprim domain maps to 82 to 181; it reads GTLCVVADSR…KVTRIAFGLP (100 aa).

It belongs to the RecR family.

In terms of biological role, may play a role in DNA repair. It seems to be involved in an RecBC-independent recombinational process of DNA repair. It may act with RecF and RecO. The protein is Recombination protein RecR of Cyanothece sp. (strain PCC 7425 / ATCC 29141).